Here is a 98-residue protein sequence, read N- to C-terminus: MKAYDIIVSPMLTEKTNTQRESINVYVFKVNKRANKKEVGAAIKELFNVTPVSCNLLNIKSKAKVVVSRRGYPIGKGKTSSWKKAYVYLKKEDKIDIF.

This sequence belongs to the universal ribosomal protein uL23 family. As to quaternary structure, part of the 50S ribosomal subunit. Contacts protein L29, and trigger factor when it is bound to the ribosome.

In terms of biological role, one of the early assembly proteins it binds 23S rRNA. One of the proteins that surrounds the polypeptide exit tunnel on the outside of the ribosome. Forms the main docking site for trigger factor binding to the ribosome. The polypeptide is Large ribosomal subunit protein uL23 (Borrelia garinii subsp. bavariensis (strain ATCC BAA-2496 / DSM 23469 / PBi) (Borreliella bavariensis)).